Consider the following 319-residue polypeptide: Probable NAD(P)H-dependent D-xylose reductase xyl1 (319 aa).

Tyrosine 50 functions as the Proton donor in the catalytic mechanism. Histidine 112 lines the substrate pocket. NAD(+)-binding positions include 166-167 (SN), 215-224 (SSFGPLSFLE), and 271-281 (KSNNPARLLQN).

This sequence belongs to the aldo/keto reductase family.

The enzyme catalyses xylitol + NAD(+) = D-xylose + NADH + H(+). It catalyses the reaction xylitol + NADP(+) = D-xylose + NADPH + H(+). The protein operates within carbohydrate metabolism; D-xylose degradation. Its function is as follows. Catalyzes the initial reaction in the xylose utilization pathway by reducing D-xylose into xylitol. Xylose is a major component of hemicelluloses such as xylan. Most fungi utilize D-xylose via three enzymatic reactions, xylose reductase (XR), xylitol dehydrogenase (XDH), and xylulokinase, to form xylulose 5-phosphate, which enters pentose phosphate pathway. The chain is Probable NAD(P)H-dependent D-xylose reductase xyl1 (xyl1) from Emericella nidulans (strain FGSC A4 / ATCC 38163 / CBS 112.46 / NRRL 194 / M139) (Aspergillus nidulans).